Here is a 332-residue protein sequence, read N- to C-terminus: L-lactate dehydrogenase A chain (332 aa).

At Ala2 the chain carries N-acetylalanine. At Lys5 the chain carries N6-acetyllysine; alternate. The residue at position 5 (Lys5) is an N6-succinyllysine; alternate. Phosphotyrosine is present on Tyr10. Lys14 carries the post-translational modification N6-acetyllysine. At Thr18 the chain carries Phosphothreonine. 29 to 57 contributes to the NAD(+) binding site; that stretch reads GAVGMACAISILMKDLADELALVDVIEDK. Lys57 is subject to N6-acetyllysine; alternate. Lys57 is covalently cross-linked (Glycyl lysine isopeptide (Lys-Gly) (interchain with G-Cter in SUMO2); alternate). The residue at position 81 (Lys81) is an N6-acetyllysine. Arg99 provides a ligand contact to NAD(+). Arg106 lines the substrate pocket. At Lys118 the chain carries N6-acetyllysine; alternate. Residue Lys118 is modified to N6-succinyllysine; alternate. Position 126 is an N6-acetyllysine (Lys126). Position 138 (Asn138) interacts with NAD(+). Residues Asn138 and Arg169 each contribute to the substrate site. His193 functions as the Proton acceptor in the catalytic mechanism. An N6-acetyllysine mark is found at Lys224 and Lys232. Tyr239 is subject to Phosphotyrosine. N6-acetyllysine is present on Lys243. Residue Thr248 coordinates substrate. Phosphothreonine is present on Thr309. Ser310 is subject to Phosphoserine. The residue at position 318 (Lys318) is an N6-acetyllysine; alternate. N6-succinyllysine; alternate is present on Lys318. Thr322 bears the Phosphothreonine mark.

It belongs to the LDH/MDH superfamily. LDH family. Homotetramer. Interacts with PTEN upstream reading frame protein MP31. Interacts with folliculin FLCN; the interaction is direct and inhibits enzymatic activity. ISGylated. As to expression, predominantly expressed in anaerobic tissues such as skeletal muscle and liver.

It is found in the cytoplasm. The catalysed reaction is (S)-lactate + NAD(+) = pyruvate + NADH + H(+). It participates in fermentation; pyruvate fermentation to lactate; (S)-lactate from pyruvate: step 1/1. With respect to regulation, fermentation of pyruvate to lactate is inhibited when bound to folliculin FLCN, perhaps partly by FLCN preventing binding of cofactor NADH. In terms of biological role, interconverts simultaneously and stereospecifically pyruvate and lactate with concomitant interconversion of NADH and NAD(+). This Homo sapiens (Human) protein is L-lactate dehydrogenase A chain.